Consider the following 217-residue polypeptide: Probable GTP-binding protein EngB (217 aa).

The EngB-type G domain maps to 32-205 (GTPQIAFAGR…RKIVYSLIET (174 aa)). GTP contacts are provided by residues 40 to 47 (GRSNAGKS), 67 to 71 (GKTKL), 85 to 88 (DLPG), 152 to 155 (TKID), and 184 to 186 (VSN). Mg(2+) contacts are provided by S47 and T69.

This sequence belongs to the TRAFAC class TrmE-Era-EngA-EngB-Septin-like GTPase superfamily. EngB GTPase family. The cofactor is Mg(2+).

In terms of biological role, necessary for normal cell division and for the maintenance of normal septation. This Leptospira interrogans serogroup Icterohaemorrhagiae serovar copenhageni (strain Fiocruz L1-130) protein is Probable GTP-binding protein EngB.